Consider the following 379-residue polypeptide: Cytochrome b (379 aa).

The next 4 helical transmembrane spans lie at 33-53 (FGSL…FLAM), 77-98 (WLIR…FIHV), 113-133 (WNIG…GYVL), and 178-198 (FFAF…VHLL). Positions 83 and 97 each coordinate heme b. Heme b is bound by residues H182 and H196. H201 contacts a ubiquinone. 4 consecutive transmembrane segments (helical) span residues 226–246 (TKDL…TLFF), 288–308 (LGGV…PLLN), 320–340 (ITQT…WIGG), and 347–367 (FTTI…ILIP).

Belongs to the cytochrome b family. The cytochrome bc1 complex contains 11 subunits: 3 respiratory subunits (MT-CYB, CYC1 and UQCRFS1), 2 core proteins (UQCRC1 and UQCRC2) and 6 low-molecular weight proteins (UQCRH/QCR6, UQCRB/QCR7, UQCRQ/QCR8, UQCR10/QCR9, UQCR11/QCR10 and a cleavage product of UQCRFS1). This cytochrome bc1 complex then forms a dimer. Requires heme b as cofactor.

It is found in the mitochondrion inner membrane. Component of the ubiquinol-cytochrome c reductase complex (complex III or cytochrome b-c1 complex) that is part of the mitochondrial respiratory chain. The b-c1 complex mediates electron transfer from ubiquinol to cytochrome c. Contributes to the generation of a proton gradient across the mitochondrial membrane that is then used for ATP synthesis. The sequence is that of Cytochrome b (MT-CYB) from Akodon azarae (Azara's grass mouse).